The chain runs to 244 residues: Ribonuclease PH (244 aa).

Phosphate-binding positions include Arg86 and 124-126 (GTR).

The protein belongs to the RNase PH family. As to quaternary structure, homohexameric ring arranged as a trimer of dimers.

The catalysed reaction is tRNA(n+1) + phosphate = tRNA(n) + a ribonucleoside 5'-diphosphate. Phosphorolytic 3'-5' exoribonuclease that plays an important role in tRNA 3'-end maturation. Removes nucleotide residues following the 3'-CCA terminus of tRNAs; can also add nucleotides to the ends of RNA molecules by using nucleoside diphosphates as substrates, but this may not be physiologically important. Probably plays a role in initiation of 16S rRNA degradation (leading to ribosome degradation) during starvation. This Oceanobacillus iheyensis (strain DSM 14371 / CIP 107618 / JCM 11309 / KCTC 3954 / HTE831) protein is Ribonuclease PH.